The primary structure comprises 156 residues: Arginine repressor (156 aa).

This sequence belongs to the ArgR family.

The protein localises to the cytoplasm. The protein operates within amino-acid biosynthesis; L-arginine biosynthesis [regulation]. In terms of biological role, regulates arginine biosynthesis genes. This chain is Arginine repressor, found in Yersinia enterocolitica serotype O:8 / biotype 1B (strain NCTC 13174 / 8081).